The following is a 127-amino-acid chain: Serum amyloid A protein (127 aa).

The first 18 residues, 1-18, serve as a signal peptide directing secretion; that stretch reads MKLLTSLFLLSLVLCVNS. Pyrrolidone carboxylic acid is present on glutamine 19. The tract at residues 89–127 is disordered; the sequence is GGSSGRGVEDSMADQEANRWGRSGKDPNRYRPKGLDPKY. The span at 104-127 shows a compositional bias: basic and acidic residues; the sequence is EANRWGRSGKDPNRYRPKGLDPKY.

The protein belongs to the SAA family. In terms of tissue distribution, expressed by the liver; secreted in plasma.

Its subcellular location is the secreted. Functionally, major acute phase reactant. Apolipoprotein of the HDL complex. This chain is Serum amyloid A protein (SAA1), found in Notamacropus eugenii (Tammar wallaby).